Consider the following 289-residue polypeptide: Homoserine kinase (289 aa).

79–89 (PLARGLGSSSS) serves as a coordination point for ATP.

It belongs to the GHMP kinase family. Homoserine kinase subfamily.

The protein resides in the cytoplasm. It catalyses the reaction L-homoserine + ATP = O-phospho-L-homoserine + ADP + H(+). Its pathway is amino-acid biosynthesis; L-threonine biosynthesis; L-threonine from L-aspartate: step 4/5. Functionally, catalyzes the ATP-dependent phosphorylation of L-homoserine to L-homoserine phosphate. The protein is Homoserine kinase of Streptococcus pneumoniae (strain Taiwan19F-14).